A 103-amino-acid chain; its full sequence is MADDKDSLPKLKDLAFLKNQLESLQRRVEDEVNSGVGQDGSLLSSPFLKGFLAGYVVAKLRASAVLGFAVGTCTGIYAAQAYAVPNVEKTLRDYLQLLRKGPD.

A helical transmembrane segment spans residues 62–84 (ASAVLGFAVGTCTGIYAAQAYAV).

The protein localises to the mitochondrion inner membrane. Required to maintain cellular respiration. The polypeptide is SLC35A4 upstream open reading frame protein (Homo sapiens (Human)).